The chain runs to 483 residues: Threonine synthase-like 2 (483 aa).

Lys113 carries the post-translational modification N6-(pyridoxal phosphate)lysine.

This sequence belongs to the threonine synthase family. Pyridoxal 5'-phosphate serves as cofactor.

Functionally, acts as a catabolic phospho-lyase on both gamma- and beta-phosphorylated substrates. Degrades O-phospho-threonine (PThr) to alpha-ketobutyrate, ammonia and phosphate. Also degrades O-phospho-homoserine (PHS), but this is not its physiological substrate. This chain is Threonine synthase-like 2 (Thnsl2), found in Mus musculus (Mouse).